The sequence spans 77 residues: Oxyopinin-4a (77 aa).

A signal peptide spans 1 to 20 (MKISQVFIFVFLLMISVAWA). Residues 21-47 (NEAYEEESNYLSERFDADVEEITPEFR) constitute a propeptide that is removed on maturation. A disulfide bond links cysteine 51 and cysteine 57.

Expressed by the venom gland.

Its subcellular location is the secreted. The protein localises to the target cell membrane. Its function is as follows. Disrupts cell membranes through the formation of pores. Has antibacterial activity against Gram-positive bacteria S.aureus (MIC=10 uM) and B.subtilis (MIC=0.5 uM) as well as Gram-negative bacteria P.fluorescens (MIC=1 uM) and E.coli (MIC=0.5 uM). Has hemolytic activity against human erythrocytes (EC(50)=7 uM). The protein is Oxyopinin-4a of Oxyopes takobius (Lynx spider).